Reading from the N-terminus, the 1016-residue chain is Mediator of RNA polymerase II transcription subunit 5 (1016 aa).

This sequence belongs to the Mediator complex subunit 5 family. Component of the Mediator complex.

It localises to the nucleus. Functionally, component of the Mediator complex, a coactivator involved in the regulated transcription of nearly all RNA polymerase II-dependent genes. Mediator functions as a bridge to convey information from gene-specific regulatory proteins to the basal RNA polymerase II transcription machinery. Mediator is recruited to promoters by direct interactions with regulatory proteins and serves as a scaffold for the assembly of a functional preinitiation complex with RNA polymerase II and the general transcription factors. In Aspergillus terreus (strain NIH 2624 / FGSC A1156), this protein is Mediator of RNA polymerase II transcription subunit 5 (nut1).